Consider the following 430-residue polypeptide: Phosphomethylpyrimidine synthase (430 aa).

Residues asparagine 67, methionine 96, tyrosine 125, histidine 161, 183-185, 224-227, and glutamate 263 each bind substrate; these read SRG and DALR. Histidine 267 is a Zn(2+) binding site. Tyrosine 290 provides a ligand contact to substrate. A Zn(2+)-binding site is contributed by histidine 331. Positions 406, 409, and 413 each coordinate [4Fe-4S] cluster.

It belongs to the ThiC family. As to quaternary structure, homodimer. Requires [4Fe-4S] cluster as cofactor.

The enzyme catalyses 5-amino-1-(5-phospho-beta-D-ribosyl)imidazole + S-adenosyl-L-methionine = 4-amino-2-methyl-5-(phosphooxymethyl)pyrimidine + CO + 5'-deoxyadenosine + formate + L-methionine + 3 H(+). Its pathway is cofactor biosynthesis; thiamine diphosphate biosynthesis. Catalyzes the synthesis of the hydroxymethylpyrimidine phosphate (HMP-P) moiety of thiamine from aminoimidazole ribotide (AIR) in a radical S-adenosyl-L-methionine (SAM)-dependent reaction. In Campylobacter jejuni subsp. jejuni serotype O:2 (strain ATCC 700819 / NCTC 11168), this protein is Phosphomethylpyrimidine synthase.